A 284-amino-acid chain; its full sequence is Lipase chaperone (284 aa).

A helical membrane pass occupies residues 4-24 (IAWSLGILVTIGALCAIVWPS).

This sequence belongs to the lipase chaperone family.

It is found in the cell inner membrane. Its function is as follows. May be involved in the folding of the extracellular lipase during its passage through the periplasm. This chain is Lipase chaperone (lifO), found in Vibrio cholerae serotype O1 (strain ATCC 39315 / El Tor Inaba N16961).